A 253-amino-acid chain; its full sequence is tRNA (guanine-N(1)-)-methyltransferase (253 aa).

Residues Gly-116 and 136-141 each bind S-adenosyl-L-methionine; that span reads VGDYIL.

The protein belongs to the RNA methyltransferase TrmD family. In terms of assembly, homodimer.

It localises to the cytoplasm. It catalyses the reaction guanosine(37) in tRNA + S-adenosyl-L-methionine = N(1)-methylguanosine(37) in tRNA + S-adenosyl-L-homocysteine + H(+). In terms of biological role, specifically methylates guanosine-37 in various tRNAs. The protein is tRNA (guanine-N(1)-)-methyltransferase of Colwellia psychrerythraea (strain 34H / ATCC BAA-681) (Vibrio psychroerythus).